The chain runs to 321 residues: Cytochrome f (321 aa).

The first 38 residues, methionine 1–alanine 38, serve as a signal peptide directing secretion. Positions 39, 59, 62, and 63 each coordinate heme. The helical transmembrane segment at valine 288–lysine 308 threads the bilayer.

It belongs to the cytochrome f family. As to quaternary structure, the 4 large subunits of the cytochrome b6-f complex are cytochrome b6, subunit IV (17 kDa polypeptide, PetD), cytochrome f and the Rieske protein, while the 4 small subunits are PetG, PetL, PetM and PetN. The complex functions as a dimer. The cofactor is heme.

The protein resides in the cellular thylakoid membrane. Its function is as follows. Component of the cytochrome b6-f complex, which mediates electron transfer between photosystem II (PSII) and photosystem I (PSI), cyclic electron flow around PSI, and state transitions. The sequence is that of Cytochrome f from Prochlorococcus marinus (strain NATL2A).